The sequence spans 228 residues: Max-interacting protein 1 (228 aa).

Disordered regions lie at residues 29–76 (GYAS…NELE) and 161–228 (IGST…SFTS). Positions 43-56 (QHSKPPRRLSRAQK) are enriched in basic residues. Polar residues predominate over residues 57-70 (HSSGSSNTSTANRS). One can recognise a bHLH domain in the interval 67–119 (ANRSTHNELEKNRRAHLRLCLERLKVLIPLGPDCTRHTTLGLLNKAKAHIKKL). Residues 173–183 (EREEIEVDVES) are compositionally biased toward acidic residues. Residues 216–228 (GYSSASVKLSFTS) show a composition bias toward polar residues.

In terms of assembly, interacts with SMC3. Efficient DNA binding requires dimerization with another bHLH protein. Binds DNA as a heterodimer with MAX. Interacts with RNF17. As to expression, high levels found in the brain, heart and lung while lower levels are seen in the liver, kidney and skeletal muscle.

It is found in the nucleus. Functionally, transcriptional repressor. MXI1 binds with MAX to form a sequence-specific DNA-binding protein complex which recognizes the core sequence 5'-CAC[GA]TG-3'. MXI1 thus antagonizes MYC transcriptional activity by competing for MAX. In Homo sapiens (Human), this protein is Max-interacting protein 1 (MXI1).